Consider the following 144-residue polypeptide: Ribonuclease VapC1 (144 aa).

One can recognise a PINc domain in the interval 6–132; that stretch reads VFVDGNVIVD…SFYSPDIEVL (127 aa). Mg(2+)-binding residues include D9 and D102.

The protein belongs to the PINc/VapC protein family. Mg(2+) serves as cofactor.

In terms of biological role, toxic component of a type II toxin-antitoxin (TA) system. An RNase. The protein is Ribonuclease VapC1 of Aquifex aeolicus (strain VF5).